We begin with the raw amino-acid sequence, 175 residues long: ATP synthase subunit b 2 (175 aa).

Residues 20–40 (LIFWTAVTFVIVLLILKKFAW) form a helical membrane-spanning segment.

Belongs to the ATPase B chain family. In terms of assembly, F-type ATPases have 2 components, F(1) - the catalytic core - and F(0) - the membrane proton channel. F(1) has five subunits: alpha(3), beta(3), gamma(1), delta(1), epsilon(1). F(0) has four main subunits: a(1), b(2) and c(10-14). The alpha and beta chains form an alternating ring which encloses part of the gamma chain. F(1) is attached to F(0) by a central stalk formed by the gamma and epsilon chains, while a peripheral stalk is formed by the delta and b chains.

The protein resides in the cell inner membrane. F(1)F(0) ATP synthase produces ATP from ADP in the presence of a proton or sodium gradient. F-type ATPases consist of two structural domains, F(1) containing the extramembraneous catalytic core and F(0) containing the membrane proton channel, linked together by a central stalk and a peripheral stalk. During catalysis, ATP synthesis in the catalytic domain of F(1) is coupled via a rotary mechanism of the central stalk subunits to proton translocation. In terms of biological role, component of the F(0) channel, it forms part of the peripheral stalk, linking F(1) to F(0). This chain is ATP synthase subunit b 2, found in Prosthecochloris aestuarii (strain DSM 271 / SK 413).